The primary structure comprises 290 residues: Poly-beta-1,6-N-acetyl-D-glucosamine N-deacetylase (290 aa).

The N-terminal stretch at 1–28 (MKYRKLIILVLSILIILPVSTLDGHHIA) is a signal peptide. The NodB homology domain occupies 114–290 (RSVWINFDDM…KRWDGFHEKD (177 aa)).

Belongs to the polysaccharide deacetylase family.

It localises to the secreted. It is found in the cell wall. Catalyzes the N-deacetylation of poly-beta-1,6-N-acetyl-D-glucosamine (PNAG, also referred to as PIA), a biofilm adhesin polysaccharide. N-deacetylation is crucial for attachment of the polysaccharide to the bacterial cell surface; it leads to the introduction of positive charges in the otherwise neutral PIA polymer, allowing electrostatic interactions. This is Poly-beta-1,6-N-acetyl-D-glucosamine N-deacetylase (icaB) from Staphylococcus aureus (strain MRSA252).